The following is a 483-amino-acid chain: Trigger factor (483 aa).

Positions 162 to 243 (GDYVSLDLSA…VRGVKEKELP (82 aa)) constitute a PPIase FKBP-type domain. Positions 459 to 483 (AVAPGDGDATVEPVEPVEAETDGNG) are disordered. Acidic residues predominate over residues 473-483 (EPVEAETDGNG).

Belongs to the FKBP-type PPIase family. Tig subfamily.

Its subcellular location is the cytoplasm. The catalysed reaction is [protein]-peptidylproline (omega=180) = [protein]-peptidylproline (omega=0). Its function is as follows. Involved in protein export. Acts as a chaperone by maintaining the newly synthesized protein in an open conformation. Functions as a peptidyl-prolyl cis-trans isomerase. The sequence is that of Trigger factor from Frankia casuarinae (strain DSM 45818 / CECT 9043 / HFP020203 / CcI3).